The chain runs to 707 residues: Polyribonucleotide nucleotidyltransferase (707 aa).

Mg(2+)-binding residues include Asp-488 and Asp-494. Positions 555-615 (PIIKVTKIDP…ENVDNAIALI (61 aa)) constitute a KH domain. Residues 625 to 692 (GEILEGKITR…DLGRLQFKRV (68 aa)) enclose the S1 motif domain.

This sequence belongs to the polyribonucleotide nucleotidyltransferase family. The cofactor is Mg(2+).

The protein localises to the cytoplasm. The catalysed reaction is RNA(n+1) + phosphate = RNA(n) + a ribonucleoside 5'-diphosphate. Its function is as follows. Involved in mRNA degradation. Catalyzes the phosphorolysis of single-stranded polyribonucleotides processively in the 3'- to 5'-direction. In Thermotoga neapolitana (strain ATCC 49049 / DSM 4359 / NBRC 107923 / NS-E), this protein is Polyribonucleotide nucleotidyltransferase.